A 259-amino-acid chain; its full sequence is UPF0246 protein PLES_14941 (259 aa).

The protein belongs to the UPF0246 family.

This Pseudomonas aeruginosa (strain LESB58) protein is UPF0246 protein PLES_14941.